The primary structure comprises 468 residues: Probable citrate synthase, mitochondrial (468 aa).

Active-site residues include H303, H349, and D404.

This sequence belongs to the citrate synthase family. In terms of assembly, homodimer.

It is found in the mitochondrion matrix. It carries out the reaction oxaloacetate + acetyl-CoA + H2O = citrate + CoA + H(+). It participates in carbohydrate metabolism; tricarboxylic acid cycle; isocitrate from oxaloacetate: step 1/2. The polypeptide is Probable citrate synthase, mitochondrial (cts-1) (Caenorhabditis elegans).